The sequence spans 1085 residues: Solute carrier family 12 member 4 (1085 aa).

The Cytoplasmic portion of the chain corresponds to 1-119 (MPHFTVVPVD…RRAAKAPSMG (119 aa)). 5 positions are modified to phosphoserine: Ser24, Ser47, Ser51, Ser81, and Ser88. Positions 32 to 56 (AEREDSDGQGNHRENSPFLSPLDAS) are disordered. A discontinuously helical membrane pass occupies residues 120–141 (TLMGVYLPCLQNIFGVILFLRL). K(+) contacts are provided by Asn131 and Ile132. Residues 142–149 (TWMVGTAG) lie on the Extracellular side of the membrane. The helical transmembrane segment at 150 to 172 (VLQALLIVLICCCCTLLTAISMS) threads the bilayer. Over 173 to 196 (AIATNGVVPAGGSYFMISRSLGPE) the chain is Cytoplasmic. The chain crosses the membrane as a helical span at residues 197 to 225 (FGGAVGLCFYLGTTFAAAMYILGAIEILL). Tyr216 serves as a coordination point for K(+). Residues 226–248 (TYIAPPAAIFYPSGTHDMSSATL) lie on the Extracellular side of the membrane. A run of 2 helical transmembrane segments spans residues 249 to 271 (NNMR…VGVK) and 272 to 297 (YVNK…GGIK). At 298–419 (SAFDPPVFPV…LYVVADIATS (122 aa)) the chain is on the extracellular side. Cys308 and Cys323 form a disulfide bridge. N-linked (GlcNAc...) asparagine glycans are attached at residues Asn312, Asn331, and Asn347. Cys343 and Cys353 are disulfide-bonded. A helical membrane pass occupies residues 420–440 (FTVLVGIFFPSVTGIMAGSNR). Positions 429 and 432 each coordinate K(+). Chloride contacts are provided by Gly433, Ile434, and Met435. Topologically, residues 441–450 (SGDLRDAQKS) are cytoplasmic. The helical transmembrane segment at 451-473 (IPVGTILAIVTTSLVYFSSVILF) threads the bilayer. At 474 to 504 (GACIEGVVLRDKYGDGVSRNLVVGTLAWPSP) the chain is on the extracellular side. A helical membrane pass occupies residues 505–531 (WVIVVGSFFSTCGAGLQSLTGAPRLLQ). Residues 532 to 554 (AIAKDNIIPFLRVFGHGKANGEP) lie on the Cytoplasmic side of the membrane. Helical transmembrane passes span 555–575 (TWAL…ASLD) and 576–598 (MVAP…ACAV). Tyr589 contacts chloride. At 599–612 (QTLLRTPNWRPRFK) the chain is on the cytoplasmic side. The next 2 membrane-spanning stretches (helical) occupy residues 613–635 (YYHW…VSSW) and 636–651 (YYAL…IYKY). Residues 652–1085 (IEYQGAEKEW…GGREVITIYS (434 aa)) lie on the Cytoplasmic side of the membrane. Positions 665–681 (IRGLSLSAARYALLRLE) are scissor helix. Residues Leu697, Lys699, Lys707, Tyr708, and Val730 each contribute to the ATP site. Ser734 is modified (phosphoserine). 3 residues coordinate ATP: Gly794, Trp795, and Tyr797. 2 positions are modified to phosphoserine: Ser916 and Ser967. At Thr983 the chain carries Phosphothreonine. Ser1050 is modified (phosphoserine).

This sequence belongs to the SLC12A transporter family. K/Cl co-transporter subfamily. Homodimer; adopts a domain-swap conformation at the scissor helices connecting the transmembrane domain and C-terminal domain. Heterodimer with other K-Cl cotransporters. Post-translationally, N-glycosylated. Phosphorylated, phosphorylation may regulate transporter activity. Ubiquitous.

Its subcellular location is the cell membrane. The catalysed reaction is K(+)(in) + chloride(in) = K(+)(out) + chloride(out). With respect to regulation, inhibited by WNK3. In terms of biological role, mediates electroneutral potassium-chloride cotransport when activated by cell swelling. May contribute to cell volume homeostasis in single cells. May be involved in the regulation of basolateral Cl(-) exit in NaCl absorbing epithelia. The polypeptide is Solute carrier family 12 member 4 (Slc12a4) (Rattus norvegicus (Rat)).